Reading from the N-terminus, the 651-residue chain is MFCWLSRLCGELSTPTRRTTQLIWSSAARSMVLSSQRIPELSSFVARTNTCGELRSSHLGQEVTLCGWIQFRRQNIFLVLRDFHGLVQVVIPQDESAASVKKILCEAPMESVVQVSGTVISRPPGQKNPKMPTGEIEIKVKTAKLLNSCKKLPFEIKDFMKKTETLRLQYRYLDLRSVQMQYNLRLRSQMVMKMREYLCNLHGFVDVETPTLFKRTPGGAKEFVIPSREPGKFYSLPQSPQQFKQLLMVGGLDRYFQVARCYRDEGSRPDRQPEFTQIDIEMSFVDQTGVQSLIEGLLQYSWPSDKDPLVVPFPSMPFAEALASYGTDKPDTRFGMKIVDISDMFRNTEVGFLQDALSKPQGTVKAICIRKGAKYLKRKDIESIRKFAADHFNEEVLPIFLKTNENWNSPVAKFIMEEQGLGLVKLLETQEEDVVLLTAGEHKKACSLMGKLRLECADLLEARGVVLRDPALFSFLWVVDFPLFLPKEENPQELESAHHPFTAPHPSDIHLLYTEPHKVRSQHYDLVLNGNEIGGGSIRIHNSELQHCVLDTVLKEDVKLLSHLLQALDYGAPPHGGIALGLDRLMCLVTGAPSIRDVIAFPKSFRGHDLMSNAPDSIPPEELKPYHIQVSWPMDAETEKSSSNHPCRSES.

The N-terminal 44 residues, 1 to 44 (MFCWLSRLCGELSTPTRRTTQLIWSSAARSMVLSSQRIPELSSF), are a transit peptide targeting the mitochondrion. Thr-216 bears the Phosphothreonine mark. Ser-239 carries the phosphoserine modification. The segment at 241 to 244 (QQFK) is aspartate. Arg-263 is a binding site for L-aspartate. Position 263-265 (263-265 (RDE)) interacts with ATP. Residue Lys-379 is modified to N6-acetyllysine. Glu-532 is a binding site for ATP. Arg-539 provides a ligand contact to L-aspartate. 581-584 (GLDR) contributes to the ATP binding site.

This sequence belongs to the class-II aminoacyl-tRNA synthetase family. Type 1 subfamily. Homodimer.

It is found in the mitochondrion matrix. The protein localises to the mitochondrion membrane. The catalysed reaction is tRNA(Asp) + L-aspartate + ATP = L-aspartyl-tRNA(Asp) + AMP + diphosphate. Its function is as follows. Catalyzes the attachment of aspartate to tRNA(Asp) in a two-step reaction: aspartate is first activated by ATP to form Asp-AMP and then transferred to the acceptor end of tRNA(Asp). This is Aspartate--tRNA ligase, mitochondrial (DARS2) from Bos taurus (Bovine).